The primary structure comprises 62 residues: MTIAFQLAVFALIVTSSILLISVPVVFASPDGWSGNKNVVFSGTSLWIGLVFLVGILNSLIS.

The next 2 membrane-spanning stretches (helical) occupy residues 8 to 28 (AVFALIVTSSILLISVPVVFA) and 41 to 61 (FSGTSLWIGLVFLVGILNSLI).

Belongs to the PsbZ family. In terms of assembly, PSII is composed of 1 copy each of membrane proteins PsbA, PsbB, PsbC, PsbD, PsbE, PsbF, PsbH, PsbI, PsbJ, PsbK, PsbL, PsbM, PsbT, PsbY, PsbZ, Psb30/Ycf12, at least 3 peripheral proteins of the oxygen-evolving complex and a large number of cofactors. It forms dimeric complexes.

The protein resides in the plastid. It is found in the chloroplast thylakoid membrane. May control the interaction of photosystem II (PSII) cores with the light-harvesting antenna, regulates electron flow through the 2 photosystem reaction centers. PSII is a light-driven water plastoquinone oxidoreductase, using light energy to abstract electrons from H(2)O, generating a proton gradient subsequently used for ATP formation. In Cucumis sativus (Cucumber), this protein is Photosystem II reaction center protein Z.